We begin with the raw amino-acid sequence, 190 residues long: Biphenyl-2,3-diol 1,2-dioxygenase 2 (190 aa).

The region spanning 6–124 is the VOC domain; that stretch reads KFAHVVLQTS…DGNFVELQID (119 aa). Residues H9, H72, and E120 each coordinate Fe cation.

It belongs to the extradiol ring-cleavage dioxygenase family. In terms of assembly, homohexamer. Fe(2+) is required as a cofactor.

The enzyme catalyses biphenyl-2,3-diol + O2 = 2-hydroxy-6-oxo-6-phenylhexa-2,4-dienoate + H(+). It functions in the pathway xenobiotic degradation; biphenyl degradation; 2-hydroxy-2,4-pentadienoate and benzoate from biphenyl: step 3/4. This chain is Biphenyl-2,3-diol 1,2-dioxygenase 2 (bphC2), found in Rhodococcus globerulus.